A 62-amino-acid chain; its full sequence is Potassium channel toxin alpha-KTx 10.1 (62 aa).

A signal peptide spans 1-22; it reads MEGIAKITLILLFLFVTMHTFA. Residues 23–28 constitute a propeptide that is removed on maturation; sequence NWNTEA. 3 disulfides stabilise this stretch: C31–C50, C36–C55, and C40–C57. Position 60 is a tyrosine amide (Y60).

It belongs to the short scorpion toxin superfamily. Potassium channel inhibitor family. Alpha-KTx 10 subfamily. Expressed by the venom gland.

Its subcellular location is the secreted. Its function is as follows. Blocks Shaker B (Sh) and voltage-gated potassium-channels Kv1.1/KCNA1, Kv1.2/KCNA2, Kv1.3/KCNA3. Also inhibits small conductance calcium-activated potassium channels (KCNN) and intermediate conductance calcium-activated potassium channel (KCa3.1/KCNN4). The sequence is that of Potassium channel toxin alpha-KTx 10.1 from Centruroides noxius (Mexican scorpion).